Consider the following 206-residue polypeptide: Small ribosomal subunit protein uS4 (206 aa).

In terms of domain architecture, S4 RNA-binding spans 96–156 (GRLDNVVYRM…EKAKKQSRVK (61 aa)).

This sequence belongs to the universal ribosomal protein uS4 family. In terms of assembly, part of the 30S ribosomal subunit. Contacts protein S5. The interaction surface between S4 and S5 is involved in control of translational fidelity.

In terms of biological role, one of the primary rRNA binding proteins, it binds directly to 16S rRNA where it nucleates assembly of the body of the 30S subunit. With S5 and S12 plays an important role in translational accuracy. This is Small ribosomal subunit protein uS4 from Shigella flexneri.